The sequence spans 182 residues: Putative manganese efflux pump MntP (182 aa).

The next 6 helical transmembrane spans lie at 6-26 (LIPL…VSLG), 37-57 (ILYI…IGMV), 71-91 (HFAG…SSIL), 101-121 (IGIS…SVGL), 131-151 (VITI…GLFI), and 162-182 (YGEI…LFPI).

The protein belongs to the MntP (TC 9.B.29) family.

Its subcellular location is the cell membrane. Its function is as follows. Probably functions as a manganese efflux pump. This Bacillus cereus (strain Q1) protein is Putative manganese efflux pump MntP.